Reading from the N-terminus, the 521-residue chain is Non-specific phospholipase C5 (521 aa).

Residues 478–487 (SKKARERGGD) are compositionally biased toward basic and acidic residues. Positions 478 to 521 (SKKARERGGDENDIVFCVDDDDDHNVVKPPPSQSEPSHATPWSN) are disordered. The segment covering 511–521 (SEPSHATPWSN) has biased composition (polar residues).

Belongs to the bacterial phospholipase C family. Specifically expressed in flowers.

It is found in the cytoplasm. The protein resides in the cytosol. The catalysed reaction is a 1,2-diacyl-sn-glycero-3-phosphocholine + H2O = phosphocholine + a 1,2-diacyl-sn-glycerol + H(+). In terms of biological role, non-specific phospholipase C (PLC) which assumes minor PLC activity during inorganic phosphate starvation. Can hydrolyze both phosphatidylcholine (PC) and phosphatidylethanolamine (PE). Required for normal accumulation of digalactosyldiacylglycerol (DGDG) during phosphate limitation and may contribute to the conversion of phospholipids to diacylglycerol, the substrate for galactolipid synthesis. This Arabidopsis thaliana (Mouse-ear cress) protein is Non-specific phospholipase C5 (NPC5).